A 243-amino-acid chain; its full sequence is 2-C-methyl-D-erythritol 4-phosphate cytidylyltransferase (243 aa).

The protein belongs to the IspD/TarI cytidylyltransferase family. IspD subfamily.

The catalysed reaction is 2-C-methyl-D-erythritol 4-phosphate + CTP + H(+) = 4-CDP-2-C-methyl-D-erythritol + diphosphate. It participates in isoprenoid biosynthesis; isopentenyl diphosphate biosynthesis via DXP pathway; isopentenyl diphosphate from 1-deoxy-D-xylulose 5-phosphate: step 2/6. Its function is as follows. Catalyzes the formation of 4-diphosphocytidyl-2-C-methyl-D-erythritol from CTP and 2-C-methyl-D-erythritol 4-phosphate (MEP). In Chlorobium phaeovibrioides (strain DSM 265 / 1930) (Prosthecochloris vibrioformis (strain DSM 265)), this protein is 2-C-methyl-D-erythritol 4-phosphate cytidylyltransferase.